We begin with the raw amino-acid sequence, 387 residues long: Paralemmin-1 (387 aa).

Residue methionine 1 is modified to N-acetylmethionine. The stretch at 7 to 104 forms a coiled coil; the sequence is ETISQQERLQ…IEELENADTL (98 aa). Disordered stretches follow at residues 22 to 78 and 98 to 133; these read RRRQ…QEDE and LENADTLPAPVKETQVAPSPGPVVPAPCPAQEDRKA. 2 stretches are compositionally biased toward basic and acidic residues: residues 25-41 and 69-78; these read QAEVENRRRQLEDDRRQ and DMRKQMQEDE. A Phosphoserine modification is found at serine 116. Pro residues predominate over residues 116-125; it reads SPGPVVPAPC. A phosphothreonine mark is found at threonine 142 and threonine 146. Serine 163 carries the phosphoserine modification. Residue threonine 244 is modified to Phosphothreonine. Serine 246 is modified (phosphoserine). 2 disordered regions span residues 246 to 297 and 334 to 378; these read SEAG…QEPP and AAEP…DMKK. Residues 258-273 are compositionally biased toward basic and acidic residues; it reads GPSEEVVRTTPSRREI. The segment covering 286-297 has biased composition (low complexity); the sequence is GPPGIQPGQEPP. Phosphoserine occurs at positions 346 and 369. Residues cysteine 381 and cysteine 383 are each lipidated (S-palmitoyl cysteine). Cysteine 384 is subject to Cysteine methyl ester. A lipid anchor (S-farnesyl cysteine) is attached at cysteine 384. Residues 385 to 387 constitute a propeptide, removed in mature form; that stretch reads SIM.

This sequence belongs to the paralemmin family. Interacts with dopamine receptor DRD3. Post-translationally, phosphorylated.

The protein resides in the cell membrane. Its subcellular location is the cell projection. The protein localises to the filopodium membrane. It localises to the axon. It is found in the dendrite. The protein resides in the dendritic spine. Its subcellular location is the basolateral cell membrane. The protein localises to the apicolateral cell membrane. Involved in plasma membrane dynamics and cell process formation. Necessary for axonal and dendritic filopodia induction, for dendritic spine maturation and synapse formation in a palmitoylation-dependent manner. The polypeptide is Paralemmin-1 (PALM) (Sus scrofa (Pig)).